Consider the following 478-residue polypeptide: Cytochrome c biogenesis protein CcsB (478 aa).

3 consecutive transmembrane segments (helical) span residues L30–I50, T89–T109, and F175–S195. Residues L453–G478 are disordered. A compositionally biased stretch (pro residues) spans P456–A466.

This sequence belongs to the Ccs1/CcsB family. In terms of assembly, may interact with CcsA.

Its subcellular location is the cellular thylakoid membrane. Functionally, required during biogenesis of c-type cytochromes (cytochrome c6 and cytochrome f) at the step of heme attachment. The chain is Cytochrome c biogenesis protein CcsB from Synechococcus sp. (strain JA-3-3Ab) (Cyanobacteria bacterium Yellowstone A-Prime).